The following is a 173-amino-acid chain: Phosphopantetheine adenylyltransferase (173 aa).

Substrate is bound at residue Thr9. ATP contacts are provided by residues 9-10 (TF) and His17. Substrate is bound by residues Lys41, Thr75, and Arg89. Residues 90 to 92 (GLR), Glu100, and 125 to 131 (HIYLSSS) contribute to the ATP site.

Belongs to the bacterial CoaD family. In terms of assembly, homohexamer. Mg(2+) is required as a cofactor.

The protein resides in the cytoplasm. The enzyme catalyses (R)-4'-phosphopantetheine + ATP + H(+) = 3'-dephospho-CoA + diphosphate. It functions in the pathway cofactor biosynthesis; coenzyme A biosynthesis; CoA from (R)-pantothenate: step 4/5. Functionally, reversibly transfers an adenylyl group from ATP to 4'-phosphopantetheine, yielding dephospho-CoA (dPCoA) and pyrophosphate. This is Phosphopantetheine adenylyltransferase from Methylacidiphilum infernorum (isolate V4) (Methylokorus infernorum (strain V4)).